The primary structure comprises 208 residues: Myosin light chain 6B (208 aa).

Residues 1–51 (MPPKKDVPVKKPAGPSISKPAAKPAAAGAPPAKTKAEPAVPQAPQKTQEPP) form a disordered region. Low complexity predominate over residues 10–40 (KKPAGPSISKPAAKPAAAGAPPAKTKAEPAV). EF-hand domains lie at 64 to 99 (DQLE…LGQN), 141 to 176 (GTYE…LGEK), and 176 to 208 (KMTE…ILSV).

In terms of assembly, myosin is a hexamer of 2 heavy chains and 4 light chains.

Regulatory light chain of myosin. Does not bind calcium. In Homo sapiens (Human), this protein is Myosin light chain 6B (MYL6B).